We begin with the raw amino-acid sequence, 263 residues long: Triosephosphate isomerase (263 aa).

10 to 12 (NWK) serves as a coordination point for substrate. The Electrophile role is filled by H104. E176 acts as the Proton acceptor in catalysis. Substrate is bound by residues G182, S221, and 242-243 (GG).

The protein belongs to the triosephosphate isomerase family. Homodimer.

The protein resides in the cytoplasm. It catalyses the reaction D-glyceraldehyde 3-phosphate = dihydroxyacetone phosphate. Its pathway is carbohydrate biosynthesis; gluconeogenesis. The protein operates within carbohydrate degradation; glycolysis; D-glyceraldehyde 3-phosphate from glycerone phosphate: step 1/1. Its function is as follows. Involved in the gluconeogenesis. Catalyzes stereospecifically the conversion of dihydroxyacetone phosphate (DHAP) to D-glyceraldehyde-3-phosphate (G3P). The protein is Triosephosphate isomerase of Haemophilus influenzae (strain ATCC 51907 / DSM 11121 / KW20 / Rd).